The chain runs to 224 residues: Jacalin-related lectin 24 (224 aa).

The Jacalin-type lectin domain occupies 8–160 (MFKVGPIGSK…LTSIGIYVYP (153 aa)).

It belongs to the jacalin lectin family.

The chain is Jacalin-related lectin 24 (JAL24) from Arabidopsis thaliana (Mouse-ear cress).